The sequence spans 371 residues: Trans-enoyl reductase calK (371 aa).

51–54 lines the NADP(+) pocket; that stretch reads NDHK. 145-152 is a substrate binding site; it reads WSTISLAF. NADP(+) contacts are provided by residues 181–184, 204–207, Tyr222, and 269–270; these read GTAS, SNQS, and LE. Residue 289–293 participates in substrate binding; that stretch reads GFQVL. Residue 359-360 coordinates NADP(+); the sequence is VR.

It belongs to the zinc-containing alcohol dehydrogenase family. As to quaternary structure, monomer.

It functions in the pathway secondary metabolite biosynthesis. In terms of biological role, trans-enoyl reductase; part of the gene cluster that mediates the biosynthesis of calbistrin A and related compounds. Calbistrin A is a secondary metabolite with an interesting structure that was recently found to have bioactivity against leukemia cells. It consists of two polyketides linked by an ester bond: a bicyclic decalin containing polyketide and a linear 12 carbon dioic acid structure. The polyketide synthase calA is probably responsible for forming the decalin moiety. Because calA lacks a designated enoylreductase (ER) domain, the required activity is provided by the trans-enoyl reductase calK. Following release from the PKS, calF then probably catalyzes the oxidation and the subsequent Diels Alder cycloisomerization that lead to the formation of the decalin moiety. The decalin polyketide backbone includes two C-methyl groups, at C7 and C11 in backbone, of which the C7 position is probably methylated by the methyltransferase domain of calA. A candidate for adding the methyl group at C11, if not done by CalA, is the cluster methyltransferase calH. Several additional tailoring enzymes within the cluster could be involved in the modification of the decalin polyketide product. Those include the 3 cytochrome P450 monooxygenases CalE, CalG and CalL, of which one might be responsible for the introduction of the extra hydroxyl group attached to the backbone of the decalin moiety, at position C9 in the backbone, that allows for attachment of the linear moiety. One tailoring enzyme activity that is expected to be involved in biosynthesis of calbistrin is an acyltransferase for connecting the two polyketide synthase products, and which could be performed by the cluster acyltransferase calJ. The enzyme responsible for the biosynthesis of the linear moiety, probably a second PKS, has not been identified yet. This Penicillium decumbens protein is Trans-enoyl reductase calK.